The following is a 96-amino-acid chain: Small ribosomal subunit protein bS6 (96 aa).

Belongs to the bacterial ribosomal protein bS6 family.

In terms of biological role, binds together with bS18 to 16S ribosomal RNA. The chain is Small ribosomal subunit protein bS6 from Cutibacterium acnes (strain DSM 16379 / KPA171202) (Propionibacterium acnes).